The following is an 88-amino-acid chain: MAIKIRLARAGAKKKPFYQVVVADCRCRRDGRFIENVGTYDPNKNPAVYNLEEGKTLEWLGKGAQPTDTVKQILKKVGIWEKFVSPAA.

The protein belongs to the bacterial ribosomal protein bS16 family.

This chain is Small ribosomal subunit protein bS16, found in Geobacter sp. (strain M21).